The sequence spans 381 residues: MISLRKSHPLLKIINHAFIDLPAPSNISAWWNFGSLLGICLIIQILTGLFLAMHYTSDTLTAFSSVAHICRDVNYGWLLRNLHANGASMFFMCLFLHVGRGIYYGSYLYKETWNIGVILLLTVMATAFVGYVLPWGQMSFWGATVIMNLLSAIPYIGTTLAEWIWGGFAVDKATLTRFFAFHFILPFIIVAFAAVHLLFLHETGSNNPTGINPDSDKIPFHPYYTIKDALGLIFLILSLLLLGLFSPDLLGDPDNFSPANPLNTPPHIKPEWYFLFAYAILRSIPNKLGGVLALLASILILLIIPLLHTANQRSMMFRPIFQTLFWILTADLITLTWIGGQPVEQPFIIIGQLALMLYFLLILALMPLAGMFENYMLEPKW.

4 helical membrane-spanning segments follow: residues phenylalanine 33 to methionine 53, tryptophan 77 to valine 98, tryptophan 113 to leucine 133, and phenylalanine 178 to leucine 198. Residues histidine 83 and histidine 97 each coordinate heme b. Heme b contacts are provided by histidine 182 and histidine 196. Histidine 201 is a binding site for a ubiquinone. 4 helical membrane passes run isoleucine 226–serine 246, leucine 288–histidine 308, isoleucine 320–glycine 340, and phenylalanine 347–proline 367.

The protein belongs to the cytochrome b family. As to quaternary structure, the cytochrome bc1 complex contains 11 subunits: 3 respiratory subunits (MT-CYB, CYC1 and UQCRFS1), 2 core proteins (UQCRC1 and UQCRC2) and 6 low-molecular weight proteins (UQCRH/QCR6, UQCRB/QCR7, UQCRQ/QCR8, UQCR10/QCR9, UQCR11/QCR10 and a cleavage product of UQCRFS1). This cytochrome bc1 complex then forms a dimer. Requires heme b as cofactor.

The protein localises to the mitochondrion inner membrane. Its function is as follows. Component of the ubiquinol-cytochrome c reductase complex (complex III or cytochrome b-c1 complex) that is part of the mitochondrial respiratory chain. The b-c1 complex mediates electron transfer from ubiquinol to cytochrome c. Contributes to the generation of a proton gradient across the mitochondrial membrane that is then used for ATP synthesis. This is Cytochrome b (MT-CYB) from Dasykaluta rosamondae (Little red marsupial mouse).